We begin with the raw amino-acid sequence, 298 residues long: tRNA pseudouridine synthase B (298 aa).

D46 (nucleophile) is an active-site residue.

The protein belongs to the pseudouridine synthase TruB family. Type 1 subfamily.

The catalysed reaction is uridine(55) in tRNA = pseudouridine(55) in tRNA. Responsible for synthesis of pseudouridine from uracil-55 in the psi GC loop of transfer RNAs. This Paracoccus denitrificans (strain Pd 1222) protein is tRNA pseudouridine synthase B.